The sequence spans 220 residues: Probable glutathione S-transferase parA (220 aa).

The 80-residue stretch at 4-83 (NNVVLLDFWP…YIDEVWHDKC (80 aa)) folds into the GST N-terminal domain. Glutathione contacts are provided by residues serine 14, lysine 41, isoleucine 55, and 67–68 (ES). The GST C-terminal domain occupies 89–209 (DPYERSQARF…LPHPHKIYGF (121 aa)).

It belongs to the GST superfamily. HSP26 family.

It catalyses the reaction RX + glutathione = an S-substituted glutathione + a halide anion + H(+). The polypeptide is Probable glutathione S-transferase parA (PARA) (Nicotiana tabacum (Common tobacco)).